Here is an 855-residue protein sequence, read N- to C-terminus: DNA mismatch repair protein MutS (855 aa).

Position 616 to 623 (616 to 623) interacts with ATP; sequence GPNMGGKS.

It belongs to the DNA mismatch repair MutS family.

In terms of biological role, this protein is involved in the repair of mismatches in DNA. It is possible that it carries out the mismatch recognition step. This protein has a weak ATPase activity. This Salmonella paratyphi C (strain RKS4594) protein is DNA mismatch repair protein MutS.